Here is a 294-residue protein sequence, read N- to C-terminus: Pyridoxal 5'-phosphate synthase subunit PdxS (294 aa).

Residue Asp-24 participates in D-ribose 5-phosphate binding. Lys-81 (schiff-base intermediate with D-ribose 5-phosphate) is an active-site residue. Gly-153 contacts D-ribose 5-phosphate. A D-glyceraldehyde 3-phosphate-binding site is contributed by Arg-165. D-ribose 5-phosphate-binding positions include Gly-214 and 235-236 (GS).

It belongs to the PdxS/SNZ family. In terms of assembly, in the presence of PdxT, forms a dodecamer of heterodimers.

It catalyses the reaction aldehydo-D-ribose 5-phosphate + D-glyceraldehyde 3-phosphate + L-glutamine = pyridoxal 5'-phosphate + L-glutamate + phosphate + 3 H2O + H(+). Its pathway is cofactor biosynthesis; pyridoxal 5'-phosphate biosynthesis. In terms of biological role, catalyzes the formation of pyridoxal 5'-phosphate from ribose 5-phosphate (RBP), glyceraldehyde 3-phosphate (G3P) and ammonia. The ammonia is provided by the PdxT subunit. Can also use ribulose 5-phosphate and dihydroxyacetone phosphate as substrates, resulting from enzyme-catalyzed isomerization of RBP and G3P, respectively. The sequence is that of Pyridoxal 5'-phosphate synthase subunit PdxS from Anoxybacillus flavithermus (strain DSM 21510 / WK1).